A 250-amino-acid chain; its full sequence is NAD-dependent protein deacylase 1 (250 aa).

A Deacetylase sirtuin-type domain is found at 1–250; sequence MRAVVELLAG…PELLRRAFPG (250 aa). 19–39 lines the NAD(+) pocket; the sequence is GAGVSAESGIPTFRDALGGLW. Substrate is bound by residues tyrosine 64 and arginine 67. Residue 98-101 participates in NAD(+) binding; sequence QNVD. Histidine 116 (proton acceptor) is an active-site residue. Positions 124, 127, 152, and 155 each coordinate Zn(2+). Residues 192–194, 218–220, and alanine 236 contribute to the NAD(+) site; these read GTS and NPQ.

This sequence belongs to the sirtuin family. Class III subfamily. Zn(2+) is required as a cofactor.

It localises to the cytoplasm. The catalysed reaction is N(6)-acetyl-L-lysyl-[protein] + NAD(+) + H2O = 2''-O-acetyl-ADP-D-ribose + nicotinamide + L-lysyl-[protein]. It catalyses the reaction N(6)-succinyl-L-lysyl-[protein] + NAD(+) + H2O = 2''-O-succinyl-ADP-D-ribose + nicotinamide + L-lysyl-[protein]. NAD-dependent lysine deacetylase and desuccinylase that specifically removes acetyl and succinyl groups on target proteins. Modulates the activities of several proteins which are inactive in their acylated form. In Pseudomonas aeruginosa (strain ATCC 15692 / DSM 22644 / CIP 104116 / JCM 14847 / LMG 12228 / 1C / PRS 101 / PAO1), this protein is NAD-dependent protein deacylase 1.